Consider the following 364-residue polypeptide: Variable large protein 21 (364 aa).

The N-terminal stretch at 1–26 is a signal peptide; sequence MRKRISAIINKLNISIMMMIVVLMIG. Residue Cys-27 is the site of N-palmitoyl cysteine attachment. Residue Cys-27 is the site of S-diacylglycerol cysteine attachment.

This sequence belongs to the variable large protein (Vlp) family. Alpha subfamily.

It is found in the cell outer membrane. Functionally, the Vlp and Vsp proteins are antigenically distinct proteins, only one vlp or vsp gene is transcriptionally active at any one time. Switching between these genes is a mechanism of host immune response evasion. The chain is Variable large protein 21 from Borrelia hermsii.